A 317-amino-acid chain; its full sequence is Acetyl-coenzyme A carboxylase carboxyl transferase subunit alpha (317 aa).

The region spanning 37–292 is the CoA carboxyltransferase C-terminal domain; it reads RLEKKAEKLR…RICLKKHLDD (256 aa).

It belongs to the AccA family. As to quaternary structure, acetyl-CoA carboxylase is a heterohexamer composed of biotin carboxyl carrier protein (AccB), biotin carboxylase (AccC) and two subunits each of ACCase subunit alpha (AccA) and ACCase subunit beta (AccD).

Its subcellular location is the cytoplasm. It carries out the reaction N(6)-carboxybiotinyl-L-lysyl-[protein] + acetyl-CoA = N(6)-biotinyl-L-lysyl-[protein] + malonyl-CoA. It participates in lipid metabolism; malonyl-CoA biosynthesis; malonyl-CoA from acetyl-CoA: step 1/1. In terms of biological role, component of the acetyl coenzyme A carboxylase (ACC) complex. First, biotin carboxylase catalyzes the carboxylation of biotin on its carrier protein (BCCP) and then the CO(2) group is transferred by the carboxyltransferase to acetyl-CoA to form malonyl-CoA. The protein is Acetyl-coenzyme A carboxylase carboxyl transferase subunit alpha of Syntrophotalea carbinolica (strain DSM 2380 / NBRC 103641 / GraBd1) (Pelobacter carbinolicus).